The sequence spans 225 residues: ATP-dependent dethiobiotin synthetase BioD (225 aa).

13 to 18 lines the ATP pocket; that stretch reads NVGKTL. Position 17 (threonine 17) interacts with Mg(2+). Lysine 38 is an active-site residue. Threonine 42 provides a ligand contact to substrate. Residues aspartate 55, 116 to 119, 176 to 177, and 205 to 207 each bind ATP; these read EGAG, NH, and PWL. The Mg(2+) site is built by aspartate 55 and glutamate 116.

This sequence belongs to the dethiobiotin synthetase family. As to quaternary structure, homodimer. Requires Mg(2+) as cofactor.

It is found in the cytoplasm. It carries out the reaction (7R,8S)-7,8-diammoniononanoate + CO2 + ATP = (4R,5S)-dethiobiotin + ADP + phosphate + 3 H(+). The protein operates within cofactor biosynthesis; biotin biosynthesis; biotin from 7,8-diaminononanoate: step 1/2. In terms of biological role, catalyzes a mechanistically unusual reaction, the ATP-dependent insertion of CO2 between the N7 and N8 nitrogen atoms of 7,8-diaminopelargonic acid (DAPA, also called 7,8-diammoniononanoate) to form a ureido ring. This Baumannia cicadellinicola subsp. Homalodisca coagulata protein is ATP-dependent dethiobiotin synthetase BioD.